A 245-amino-acid polypeptide reads, in one-letter code: UDP-N-acetyl-D-mannosaminuronic acid transferase (245 aa).

Belongs to the glycosyltransferase 26 family.

It catalyses the reaction UDP-N-acetyl-alpha-D-mannosaminouronate + N-acetyl-alpha-D-glucosaminyl-di-trans,octa-cis-undecaprenyl diphosphate = beta-D-ManNAcA-(1-&gt;4)-alpha-D-GlcNAc-di-trans,octa-cis-undecaprenyl diphosphate + UDP + H(+). The protein operates within bacterial outer membrane biogenesis; enterobacterial common antigen biosynthesis. In terms of biological role, catalyzes the synthesis of Und-PP-GlcNAc-ManNAcA (Lipid II), the second lipid-linked intermediate involved in enterobacterial common antigen (ECA) synthesis. This chain is UDP-N-acetyl-D-mannosaminuronic acid transferase, found in Photorhabdus laumondii subsp. laumondii (strain DSM 15139 / CIP 105565 / TT01) (Photorhabdus luminescens subsp. laumondii).